The following is a 386-amino-acid chain: ATP synthase gamma chain 2, chloroplastic (386 aa).

Residues 1–22 form a disordered region; it reads MTGSISTSWLLSSPSNSNSASS. The N-terminal 60 residues, 1 to 60, are a transit peptide targeting the chloroplast; the sequence is MTGSISTSWLLSSPSNSNSASSSESYSFIATLKPVRYYPFQSLTPNRISSRSPLPSIQIR. Cysteine 149 is an active-site residue. A disulfide bond links cysteine 260 and cysteine 266.

This sequence belongs to the ATPase gamma chain family. As to quaternary structure, F-type ATPases have 2 components, CF(1) - the catalytic core - and CF(0) - the membrane proton channel. CF(1) has five subunits: alpha(3), beta(3), gamma(1), delta(1), epsilon(1). CF(0) has four main subunits: a, b, b' and c.

Its subcellular location is the plastid. It is found in the chloroplast thylakoid membrane. Its function is as follows. Produces ATP from ADP in the presence of a proton gradient across the membrane. The gamma chain is believed to be important in regulating ATPase activity and the flow of protons through the CF(0) complex. This Arabidopsis thaliana (Mouse-ear cress) protein is ATP synthase gamma chain 2, chloroplastic (ATPC2).